The chain runs to 341 residues: Protein BIG GRAIN 1-like C (341 aa).

Disordered stretches follow at residues 28–61 (DGLQ…LTTL) and 76–138 (SSTT…SDDD). The span at 52-61 (NKKDDKLTTL) shows a compositional bias: basic and acidic residues. Over residues 76 to 92 (SSTTTTNSSDSSSFSSS) the composition is skewed to low complexity. Basic and acidic residues predominate over residues 105 to 138 (KLAEQGKRSGDERQRTKRTVMDNDSRLFSKSDDD).

This sequence belongs to the BIG GRAIN 1 (BG1) plant protein family.

It localises to the cell membrane. In terms of biological role, involved in auxin transport. Regulator of the auxin signaling pathway. This chain is Protein BIG GRAIN 1-like C, found in Arabidopsis thaliana (Mouse-ear cress).